Consider the following 353-residue polypeptide: Peroxidase C1A (353 aa).

The signal sequence occupies residues 1–30 (MHFSSSSTLFTCITLIPLVCLILHASLSDA). The residue at position 31 (Gln-31) is a Pyrrolidone carboxylic acid. Cystine bridges form between Cys-41–Cys-121, Cys-74–Cys-79, Cys-127–Cys-331, and Cys-207–Cys-239. Asn-43 carries N-linked (GlcNAc...) asparagine glycosylation. His-72 serves as the catalytic Proton acceptor. Ca(2+) is bound by residues Asp-73, Val-76, Gly-78, Asp-80, and Ser-82. An N-linked (GlcNAc...) asparagine glycan is attached at Asn-87. Residue Glu-94 coordinates Ca(2+). Residue Pro-169 coordinates substrate. Asn-188 carries an N-linked (GlcNAc...) asparagine glycan. Residue His-200 coordinates heme b. Thr-201 provides a ligand contact to Ca(2+). N-linked (GlcNAc...) asparagine glycans are attached at residues Asn-216, Asn-228, and Asn-244. Ca(2+) is bound by residues Asp-252, Thr-255, and Asp-260. 2 N-linked (GlcNAc...) asparagine glycosylation sites follow: Asn-285 and Asn-298. Positions 339 to 353 (LLHDMVEVVDFVSSM) are excised as a propeptide.

It belongs to the peroxidase family. Classical plant (class III) peroxidase subfamily. As to quaternary structure, monomer. Ca(2+) serves as cofactor. Heme b is required as a cofactor.

It localises to the secreted. The protein localises to the vacuole. It carries out the reaction 2 a phenolic donor + H2O2 = 2 a phenolic radical donor + 2 H2O. In terms of biological role, removal of H(2)O(2), oxidation of toxic reductants, biosynthesis and degradation of lignin, suberization, auxin catabolism, response to environmental stresses such as wounding, pathogen attack and oxidative stress. These functions might be dependent on each isozyme/isoform in each plant tissue. In Armoracia rusticana (Horseradish), this protein is Peroxidase C1A (PRXC1A).